Consider the following 227-residue polypeptide: PKHD-type hydroxylase BPSS1206 (227 aa).

Residues 78–178 (KVFPPLFNRY…RVASFFWIQS (101 aa)) form the Fe2OG dioxygenase domain. Histidine 96, aspartate 98, and histidine 159 together coordinate Fe cation. Arginine 169 serves as a coordination point for 2-oxoglutarate.

The cofactor is Fe(2+). L-ascorbate serves as cofactor.

This Burkholderia pseudomallei (strain K96243) protein is PKHD-type hydroxylase BPSS1206.